The following is a 255-amino-acid chain: 2-succinyl-6-hydroxy-2,4-cyclohexadiene-1-carboxylate synthase (255 aa).

Belongs to the AB hydrolase superfamily. MenH family. As to quaternary structure, monomer.

The catalysed reaction is 5-enolpyruvoyl-6-hydroxy-2-succinyl-cyclohex-3-ene-1-carboxylate = (1R,6R)-6-hydroxy-2-succinyl-cyclohexa-2,4-diene-1-carboxylate + pyruvate. It participates in quinol/quinone metabolism; 1,4-dihydroxy-2-naphthoate biosynthesis; 1,4-dihydroxy-2-naphthoate from chorismate: step 3/7. It functions in the pathway quinol/quinone metabolism; menaquinone biosynthesis. In terms of biological role, catalyzes a proton abstraction reaction that results in 2,5-elimination of pyruvate from 2-succinyl-5-enolpyruvyl-6-hydroxy-3-cyclohexene-1-carboxylate (SEPHCHC) and the formation of 2-succinyl-6-hydroxy-2,4-cyclohexadiene-1-carboxylate (SHCHC). This Serratia proteamaculans (strain 568) protein is 2-succinyl-6-hydroxy-2,4-cyclohexadiene-1-carboxylate synthase.